The primary structure comprises 200 residues: NAD(P)H-quinone oxidoreductase subunit 6, chloroplastic (200 aa).

Transmembrane regions (helical) follow at residues 13 to 33, 35 to 55, 64 to 84, 102 to 122, and 156 to 176; these read IIFF…VLLS, IVYS…LYFA, AQIL…VMLI, ITLA…LNTS, and LLPF…AIVI.

The protein belongs to the complex I subunit 6 family. NDH is composed of at least 16 different subunits, 5 of which are encoded in the nucleus.

It localises to the plastid. Its subcellular location is the chloroplast thylakoid membrane. The enzyme catalyses a plastoquinone + NADH + (n+1) H(+)(in) = a plastoquinol + NAD(+) + n H(+)(out). It catalyses the reaction a plastoquinone + NADPH + (n+1) H(+)(in) = a plastoquinol + NADP(+) + n H(+)(out). In terms of biological role, NDH shuttles electrons from NAD(P)H:plastoquinone, via FMN and iron-sulfur (Fe-S) centers, to quinones in the photosynthetic chain and possibly in a chloroplast respiratory chain. The immediate electron acceptor for the enzyme in this species is believed to be plastoquinone. Couples the redox reaction to proton translocation, and thus conserves the redox energy in a proton gradient. The polypeptide is NAD(P)H-quinone oxidoreductase subunit 6, chloroplastic (ndhG) (Physcomitrium patens (Spreading-leaved earth moss)).